Here is a 314-residue protein sequence, read N- to C-terminus: Olfactory receptor 5P81 (314 aa).

Topologically, residues 1 to 28 (MAFLEDGNHTVVTEFILLGLTDDPVLRV) are extracellular. Asn8 is a glycosylation site (N-linked (GlcNAc...) asparagine). A helical membrane pass occupies residues 29 to 49 (ILFIIILCIYLVTVSGNLSTI). At 50–57 (LLIRVSSQ) the chain is on the cytoplasmic side. A helical transmembrane segment spans residues 58-78 (LHHPMYFFLSHLASIDIAISS). The Extracellular portion of the chain corresponds to 79–102 (SVTPNMVVNFLVERSSISYIGCGI). Cys100 and Cys192 are joined by a disulfide. The helical transmembrane segment at 103–123 (QLGSAVFFGAIECFLLAVMAY) threads the bilayer. Residues 124 to 136 (DRFVAICNPLLYS) lie on the Cytoplasmic side of the membrane. The chain crosses the membrane as a helical span at residues 137–157 (TKMSKQVCIQLLVGSYIGGFI). The Extracellular portion of the chain corresponds to 158–199 (HASFFTLSFVSFLFCGPNRINHFFCDFTPLVELSCSDNSVLI). Residues 200-220 (ILDSFSTGTIIVITVFVIAIS) form a helical membrane-spanning segment. The Cytoplasmic segment spans residues 221-240 (YTCILITILKMHSTEGRHKA). Residues 241-261 (FSTCTSHLTVVTLLYGTVTFI) form a helical membrane-spanning segment. Topologically, residues 262 to 274 (YVMPKSSYSTDQN) are extracellular. Residues 275–295 (KVISVFYMVVIPMLNPIIYSL) traverse the membrane as a helical segment. The Cytoplasmic portion of the chain corresponds to 296–314 (RNNEIKGALKKQLGEKNIF).

Belongs to the G-protein coupled receptor 1 family.

Its subcellular location is the cell membrane. Functionally, potential odorant receptor. In Mus musculus (Mouse), this protein is Olfactory receptor 5P81.